Consider the following 255-residue polypeptide: 5'-nucleotidase SurE (255 aa).

A divalent metal cation contacts are provided by Asp-8, Asp-9, Ser-40, and Asn-93.

This sequence belongs to the SurE nucleotidase family. It depends on a divalent metal cation as a cofactor.

It is found in the cytoplasm. It catalyses the reaction a ribonucleoside 5'-phosphate + H2O = a ribonucleoside + phosphate. Its function is as follows. Nucleotidase that shows phosphatase activity on nucleoside 5'-monophosphates. The sequence is that of 5'-nucleotidase SurE from Bradyrhizobium sp. (strain BTAi1 / ATCC BAA-1182).